Consider the following 338-residue polypeptide: D-erythrose-4-phosphate dehydrogenase (338 aa).

12–13 (RI) is a binding site for NAD(+). Residues 154 to 156 (SCT), R200, 213 to 214 (TK), and R236 contribute to the substrate site. C155 functions as the Nucleophile in the catalytic mechanism. NAD(+) is bound at residue N318.

This sequence belongs to the glyceraldehyde-3-phosphate dehydrogenase family. Epd subfamily. As to quaternary structure, homotetramer.

It is found in the cytoplasm. The catalysed reaction is D-erythrose 4-phosphate + NAD(+) + H2O = 4-phospho-D-erythronate + NADH + 2 H(+). It functions in the pathway cofactor biosynthesis; pyridoxine 5'-phosphate biosynthesis; pyridoxine 5'-phosphate from D-erythrose 4-phosphate: step 1/5. Its function is as follows. Catalyzes the NAD-dependent conversion of D-erythrose 4-phosphate to 4-phosphoerythronate. The sequence is that of D-erythrose-4-phosphate dehydrogenase from Yersinia pestis bv. Antiqua (strain Antiqua).